The sequence spans 563 residues: Kdo(2)-lipid A phosphoethanolamine 7''-transferase (563 aa).

Over 1–9 (MRYIKSITQ) the chain is Cytoplasmic. The helical transmembrane segment at 10 to 30 (QKLSFLLAIYIGLFMNGAVFY) threads the bilayer. Topologically, residues 31–48 (RRFGSYAHDFTVWKGISA) are periplasmic. A helical membrane pass occupies residues 49–69 (VVELAATVLVTFFLLRLLSLF). Topologically, residues 70–79 (GRRSWRILAS) are cytoplasmic. The helical transmembrane segment at 80–100 (LVVLFSAGASYYMTFLNVVIG) threads the bilayer. At 101–117 (YGIIASVMTTDIDLSKE) the chain is on the periplasmic side. The helical transmembrane segment at 118 to 138 (VVGLNFILWLIAVSALPLILI) threads the bilayer. Residues 139–159 (WNNRCRYTLLRQLRTPGQRIR) lie on the Cytoplasmic side of the membrane. Residues 160-180 (SLAVVVLAGIMVWAPIRLLDI) form a helical membrane-spanning segment. Over 181-563 (QQKKVERATG…IPQAKEAAAN (383 aa)) the chain is Periplasmic.

The protein belongs to the phosphoethanolamine transferase family. EptB subfamily. Requires Ca(2+) as cofactor.

Its subcellular location is the cell inner membrane. The enzyme catalyses alpha-Kdo-(2-&gt;4)-alpha-Kdo-(2-&gt;6)-lipid A (E. coli) + a 1,2-diacyl-sn-glycero-3-phosphoethanolamine = 7-O-[2-aminoethoxy(hydroxy)phosphoryl]-alpha-Kdo-(2-&gt;4)-alpha-Kdo-(2-&gt;6)-lipid A + a 1,2-diacyl-sn-glycerol. It carries out the reaction alpha-Kdo-(2-&gt;4)-alpha-Kdo-(2-&gt;6)-lipid IVA (E. coli) + a 1,2-diacyl-sn-glycero-3-phosphoethanolamine = 7-O-[2-aminoethoxy(hydroxy)phosphoryl]-alpha-Kdo-(2-&gt;4)-alpha-Kdo-(2-&gt;6)-lipid IVA (E. coli) + a 1,2-diacyl-sn-glycerol. Its activity is regulated as follows. Inhibited by calcium concentrations higher than 1 mM. Catalyzes the addition of a phosphoethanolamine (pEtN) moiety to the outer 3-deoxy-D-manno-octulosonic acid (Kdo) residue of a Kdo(2)-lipid A. Phosphatidylethanolamines with one unsaturated acyl group function as pEtN donors and the reaction releases diacylglycerol. This is Kdo(2)-lipid A phosphoethanolamine 7''-transferase (eptB) from Escherichia coli (strain K12).